Reading from the N-terminus, the 142-residue chain is Large ribosomal subunit protein uL13 (142 aa).

The protein belongs to the universal ribosomal protein uL13 family. In terms of assembly, part of the 50S ribosomal subunit.

In terms of biological role, this protein is one of the early assembly proteins of the 50S ribosomal subunit, although it is not seen to bind rRNA by itself. It is important during the early stages of 50S assembly. This is Large ribosomal subunit protein uL13 from Pectobacterium atrosepticum (strain SCRI 1043 / ATCC BAA-672) (Erwinia carotovora subsp. atroseptica).